The primary structure comprises 388 residues: Alanine racemase 1 (388 aa).

Lys-40 (proton acceptor; specific for D-alanine) is an active-site residue. N6-(pyridoxal phosphate)lysine is present on Lys-40. Position 138 (Arg-138) interacts with substrate. The active-site Proton acceptor; specific for L-alanine is Tyr-268. Position 316 (Met-316) interacts with substrate.

This sequence belongs to the alanine racemase family. Pyridoxal 5'-phosphate is required as a cofactor.

It catalyses the reaction L-alanine = D-alanine. The protein operates within amino-acid biosynthesis; D-alanine biosynthesis; D-alanine from L-alanine: step 1/1. In terms of biological role, catalyzes the interconversion of L-alanine and D-alanine. May also act on other amino acids. This chain is Alanine racemase 1 (alr1), found in Caldanaerobacter subterraneus subsp. tengcongensis (strain DSM 15242 / JCM 11007 / NBRC 100824 / MB4) (Thermoanaerobacter tengcongensis).